A 444-amino-acid chain; its full sequence is Glutamate-1-semialdehyde 2,1-aminomutase (444 aa).

An N6-(pyridoxal phosphate)lysine modification is found at lysine 267.

This sequence belongs to the class-III pyridoxal-phosphate-dependent aminotransferase family. HemL subfamily. In terms of assembly, homodimer. Requires pyridoxal 5'-phosphate as cofactor.

Its subcellular location is the cytoplasm. It catalyses the reaction (S)-4-amino-5-oxopentanoate = 5-aminolevulinate. It functions in the pathway porphyrin-containing compound metabolism; protoporphyrin-IX biosynthesis; 5-aminolevulinate from L-glutamyl-tRNA(Glu): step 2/2. In Xylella fastidiosa (strain Temecula1 / ATCC 700964), this protein is Glutamate-1-semialdehyde 2,1-aminomutase.